A 518-amino-acid chain; its full sequence is E3 ubiquitin-protein ligase TRIM39 (518 aa).

Residues 29–70 (CSVCLEYLKEPVIIECGHNFCKACITRWWEDLERDFPCPVCR) form an RING-type zinc finger. The B box-type zinc finger occupies 102-143 (RDESLCPQHHEALSLFCYEDQEAVCLICAISHTHRAHTVVPL). The Zn(2+) site is built by Cys-107, His-110, Cys-129, and His-135. Residues 181–250 (ELKRLVESRR…AHLAAEVEGK (70 aa)) adopt a coiled-coil conformation. Interaction with CDKN1A stretches follow at residues 268–337 (KNIP…QLIA) and 389–518 (TSGR…TDWE). A B30.2/SPRY domain is found at 319–514 (SNFPRQYFAL…NAAPLTIRPP (196 aa)).

Belongs to the TRIM/RBCC family. In terms of assembly, isoform 1 interacts with MOAP1. Isoform 1 and isoform 2 interact with CDKN1A. Isoform 2 interacts (via domain B box-type) with CACTIN. In terms of processing, autoubiquitinated. As to expression, ubiquitous; highly expressed in brain, heart, kidney, liver, skeletal muscle, spleen and testis.

The protein resides in the cytoplasm. It localises to the cytosol. It is found in the mitochondrion. Its subcellular location is the nucleus. The enzyme catalyses S-ubiquitinyl-[E2 ubiquitin-conjugating enzyme]-L-cysteine + [acceptor protein]-L-lysine = [E2 ubiquitin-conjugating enzyme]-L-cysteine + N(6)-ubiquitinyl-[acceptor protein]-L-lysine.. It functions in the pathway protein modification; protein ubiquitination. Functionally, E3 ubiquitin-protein ligase. May facilitate apoptosis by inhibiting APC/C-Cdh1-mediated poly-ubiquitination and subsequent proteasome-mediated degradation of the pro-apoptotic protein MOAP1. Regulates the G1/S transition of the cell cycle and DNA damage-induced G2 arrest by stabilizing CDKN1A/p21. Positively regulates CDKN1A/p21 stability by competing with DTL for CDKN1A/p21 binding, therefore disrupting DCX(DTL) E3 ubiquitin ligase complex-mediated CDKN1A/p21 ubiquitination and degradation. In terms of biological role, regulates the G1/S transition of the cell cycle and DNA damage-induced G2 arrest by stabilizing CDKN1A/p21. Positively regulates CDKN1A/p21 stability by competing with DTL for CDKN1A/p21 binding, therefore disrupting DCX(DTL) E3 ubiquitin ligase complex-mediated CDKN1A/p21 ubiquitination and degradation. Negatively regulates the canonical NF-kappa-B signaling pathway via stabilization of CACTIN in an ubiquitination-independent manner. This chain is E3 ubiquitin-protein ligase TRIM39 (TRIM39), found in Homo sapiens (Human).